Reading from the N-terminus, the 238-residue chain is Ribonuclease PH (238 aa).

Residues Arg-86 and 124–126 (GTR) contribute to the phosphate site.

The protein belongs to the RNase PH family. In terms of assembly, homodimer. Has a tendency to aggregate into multimers. Requires Mg(2+) as cofactor.

The enzyme catalyses tRNA(n+1) + phosphate = tRNA(n) + a ribonucleoside 5'-diphosphate. Its function is as follows. Phosphorolytic exoribonuclease that plays an important role in tRNA 3'-end maturation; has no activity on a tRNA precursor with a 3'-terminal phosphate group. In vitro is freely reversible, adds nucleotides to the ends of RNA molecules by using nucleoside diphosphates as substrates, but this may not be physiologically important. Probably plays a role in initiation of 16S rRNA degradation (leading to ribosome degradation) during starvation. The chain is Ribonuclease PH from Escherichia coli (strain K12 / MC4100 / BW2952).